The sequence spans 501 residues: Sucrose transport protein SUT2 (501 aa).

Residues 1–31 lie on the Cytoplasmic side of the membrane; that stretch reads MPRRPSGGGGGAGPAAAAVRKVPLRKLLRAA. Residues 32–52 form a helical membrane-spanning segment; it reads SVACGVQFGWALQLSLLTPYV. Over 53–55 the chain is Extracellular; the sequence is QEL. The chain crosses the membrane as a helical span at residues 56–76; sequence GIPHAFASLVWLCGPLSGLLV. Over 77–98 the chain is Cytoplasmic; it reads QPLVGHLSDRIAPAASPLGRRR. A helical transmembrane segment spans residues 99-119; it reads PFIAAGAASIAAAVLTVGFSA. Residues 120–135 lie on the Extracellular side of the membrane; sequence DLGRIFGDSITPGSTR. A helical transmembrane segment spans residues 136 to 156; it reads LGAIIVYLVGFWLLDVGNNAT. Over 157–176 the chain is Cytoplasmic; sequence QGPCRAFLADLTENDPRRTR. A helical membrane pass occupies residues 177–197; that stretch reads IANAYFSLFMALGNILGYATG. Topologically, residues 198-222 are extracellular; the sequence is AYSGWYKIFPFTVTPSCSISCANLK. The chain crosses the membrane as a helical span at residues 223–243; it reads SAFLLDIIILVVTTCITVASV. Residues 244-278 are Cytoplasmic-facing; the sequence is QEPQSLGSDEADHPSTEQEAFLWELFGSFRYFTLP. A helical transmembrane segment spans residues 279–299; that stretch reads VWMVLIVTALTWIGWFPFILF. Over 300–327 the chain is Extracellular; the sequence is DTDWMGREIYRGSPDDPSITQSYHDGVR. The helical transmembrane segment at 328-348 threads the bilayer; it reads MGSFGLMLNSVLLGFTSIVLE. The Cytoplasmic portion of the chain corresponds to 349-356; that stretch reads KLCRKWGA. Residues 357–377 form a helical membrane-spanning segment; the sequence is GLVWGVSNILMALCFVAMLVI. At 378 to 394 the chain is on the extracellular side; sequence TYVAKNMDYPPSGVPPT. The chain crosses the membrane as a helical span at residues 395-415; the sequence is GIVIASLVVFTILGAPLAITY. Residues 416–433 lie on the Cytoplasmic side of the membrane; that stretch reads SIPYAMAASRVENLGLGQ. Residues 434-454 form a helical membrane-spanning segment; the sequence is GLAMGILNLAIVIPQVIVSLG. Residues 455 to 467 lie on the Extracellular side of the membrane; sequence SGPWDQLFGGGNA. Residues 468–488 form a helical membrane-spanning segment; sequence PAFAVAAAASFIGGLVAILGL. The Cytoplasmic portion of the chain corresponds to 489 to 501; the sequence is PRARIASRRRGHR.

The protein belongs to the glycoside-pentoside-hexuronide (GPH) cation symporter transporter (TC 2.A.2.4) family. As to quaternary structure, homodimer. Expressed in source leaf blades.

It localises to the cell membrane. The protein operates within glycan biosynthesis; sucrose metabolism. Functionally, responsible for the transport of sucrose into the cell, with the concomitant uptake of protons (symport system). May also transport other glucosides. The chain is Sucrose transport protein SUT2 (SUT2) from Oryza sativa subsp. indica (Rice).